Here is a 419-residue protein sequence, read N- to C-terminus: Histone acetyltransferase type B subunit 2 (419 aa).

WD repeat units lie at residues 131-171 (PHDG…VEAL), 177-217 (YHTE…KNIK), 225-265 (AHTD…IIHN), 267-307 (NTKK…NPLY), and 311-351 (GHED…AEQT). The interval 353–357 (DEIED) is interaction with the histone H4 N-terminus. One copy of the WD 6 repeat lies at 368–408 (GHKTSINDIAVNPNINWLVASAEEDNIVQIWKCSSNIPRIG).

It belongs to the WD repeat RBAP46/RBAP48/MSI1 family. As to quaternary structure, component of the HAT-B complex composed of at least HAT1 and HAT2. The HAT-B complex binds to histone H4 tail.

It localises to the cytoplasm. The protein resides in the nucleus. Its function is as follows. Regulatory subunit of the histone acetylase B (HAT-B) complex. The complex acetylates Lys-12 of histone H4 which is required for telomeric silencing. This Candida glabrata (strain ATCC 2001 / BCRC 20586 / JCM 3761 / NBRC 0622 / NRRL Y-65 / CBS 138) (Yeast) protein is Histone acetyltransferase type B subunit 2 (HAT2).